Reading from the N-terminus, the 631-residue chain is FAST kinase domain-containing protein 4 (631 aa).

Residues 1 to 107 (MAAHLVKRCT…NQAAMVLIRL (107 aa)) constitute a mitochondrion transit peptide. Serine 553 is modified (phosphoserine). In terms of domain architecture, RAP spans 561–619 (LAFLRWEFPNFNSRSKDLLGRFVLARRHIVAAGFLIVDVPFYEWLELKSEWQKGAYLKD).

It belongs to the FAST kinase family. In terms of tissue distribution, ubiquitously expressed. Expression detected in spleen, thymus, testis, ovary, colon, heart, smooth muscle, kidney, brain, lung, liver and white adipose tissue with highest expression in smooth muscle.

It is found in the mitochondrion matrix. Its function is as follows. Plays a role in processing of mitochondrial RNA precursors and in stabilization of a subset of mature mitochondrial RNA species, such as MT-CO1, MT-CO2, MT-CYB, MT-CO3, MT-ND3, MT-ND5 and MT-ATP8/6. May play a role in cell cycle progression. The sequence is that of FAST kinase domain-containing protein 4 from Homo sapiens (Human).